A 553-amino-acid chain; its full sequence is Mucolipin-3 (553 aa).

At 1-62 (MANPEVLVSS…FWARGRKPWK (62 aa)) the chain is on the cytoplasmic side. The segment at 52–62 (KFWARGRKPWK) is interaction with phosphoinositides. The chain crosses the membrane as a helical span at residues 63–83 (LAIQILKIAMVTIQLVLFGLS). Topologically, residues 84–283 (NQMVVAFKEE…VSGSIQKNTH (200 aa)) are extracellular. Positions 104 to 118 (KGYMDRMDDTYAVYT) are extracellular/lumenal pore loop. Residue Asn-138 is glycosylated (N-linked (GlcNAc...) asparagine). An intrachain disulfide couples Cys-159 to Cys-185. Residue Asn-205 is glycosylated (N-linked (GlcNAc...) asparagine). A disulfide bridge connects residues Cys-238 and Cys-269. Residues 284-304 (YMMIFDAFVILTCLASLVLCA) form a helical membrane-spanning segment. Residues 305–341 (RSVIRGLQLQQEFVNFFLLHYKKEVSASDQMEFINGW) are Cytoplasmic-facing. The helical transmembrane segment at 342–362 (YIMIIISDILTIVGSVLKMEI) threads the bilayer. Residues 363–371 (QAKSLTSYD) lie on the Extracellular side of the membrane. A helical membrane pass occupies residues 372–392 (VCSILLGTSTMLVWLGVIRYL). Residues 393–414 (GFFAKYNLLILTLQAALPNVMR) are Cytoplasmic-facing. A helical membrane pass occupies residues 415 to 435 (FCCCAAMIYLGYCFCGWIVLG). Residues 436 to 443 (PYHEKFRS) are Extracellular-facing. An intramembrane region (pore-forming) is located at residues 444–464 (LNRVSECLFSLINGDDMFSTF). The Selectivity filter signature appears at 456-459 (NGDD). At 465–475 (AKMQQKSYLVW) the chain is on the extracellular side. A helical transmembrane segment spans residues 476-497 (LFSRVYLYSFISLFIYMILSLF). Over 498 to 553 (IALITDTYETIKHYQQDGFPETELRKFIAECKDLPNSGKYRLEDDPPGSLLCCCKK) the chain is Cytoplasmic.

Belongs to the transient receptor (TC 1.A.4) family. Polycystin subfamily. MCOLN3 sub-subfamily. As to quaternary structure, homotetramer. Can heterooligomerize with MCOLN1; heteromeric assemblies have different channel properties as compared to the respective homooligomers and may be tissue-specific. May heterooligomerize with TRPV5 to form a functional distinct ion channel. Interacts with GABARAPL2. Post-translationally, N-glycosylated. In terms of tissue distribution, expressed in the cochlea; particularly in the inner and outer hair cells (at protein level).

The protein localises to the early endosome membrane. The protein resides in the late endosome membrane. It is found in the cytoplasmic vesicle. It localises to the autophagosome membrane. Its subcellular location is the cell projection. The protein localises to the stereocilium membrane. The catalysed reaction is Ca(2+)(in) = Ca(2+)(out). It carries out the reaction Mg(2+)(in) = Mg(2+)(out). The enzyme catalyses K(+)(in) = K(+)(out). It catalyses the reaction Na(+)(in) = Na(+)(out). With respect to regulation, channel activity is activated by PtdIns(3,5)P2 (phosphatidylinositol 3,5-bisphosphate). Inhibited by lumenal H(+) and Na(+). The channel pore shows dynamic behavior and undergoes spontaneous, Ca(2+)-dependent modulation when conducting Ca(2+). Its function is as follows. Nonselective cation channel probably playing a role in the regulation of membrane trafficking events. Acts as a Ca(2+)-permeable cation channel with inwardly rectifying activity. Mediates release of Ca(2+) from endosomes to the cytoplasm, contributes to endosomal acidification and is involved in the regulation of membrane trafficking and fusion in the endosomal pathway. Also permeable to Mg(2+), Na(+) and K(+). Does not seem to act as mechanosensory transduction channel in inner ear sensory hair cells. Proposed to play a critical role at the cochlear stereocilia ankle-link region during hair-bundle growth. Involved in the regulation of autophagy. Through association with GABARAPL2 may be involved in autophagosome formation possibly providing Ca(2+) for the fusion process. Through a possible and probably tissue-specific heteromerization with MCOLN1 may be at least in part involved in many lysosome-dependent cellular events. Possible heteromeric ion channel assemblies with TRPV5 show pharmacological similarity with TRPML3. The protein is Mucolipin-3 (Mcoln3) of Mus musculus (Mouse).